The following is a 112-amino-acid chain: FK506-binding protein 1A (112 aa).

One can recognise a PPIase FKBP-type domain in the interval 20–108; the sequence is GDFVTIHYTG…IFEVELLGIN (89 aa).

It belongs to the FKBP-type PPIase family. FKBP1 subfamily.

It localises to the cytoplasm. It carries out the reaction [protein]-peptidylproline (omega=180) = [protein]-peptidylproline (omega=0). With respect to regulation, inhibited by both FK506 and rapamycin. PPIases accelerate the folding of proteins. It catalyzes the cis-trans isomerization of proline imidic peptide bonds in oligopeptides. In Aspergillus fumigatus (strain ATCC MYA-4609 / CBS 101355 / FGSC A1100 / Af293) (Neosartorya fumigata), this protein is FK506-binding protein 1A (fpr1A).